Here is a 118-residue protein sequence, read N- to C-terminus: Large ribosomal subunit protein bL20 (118 aa).

The protein belongs to the bacterial ribosomal protein bL20 family.

Binds directly to 23S ribosomal RNA and is necessary for the in vitro assembly process of the 50S ribosomal subunit. It is not involved in the protein synthesizing functions of that subunit. The chain is Large ribosomal subunit protein bL20 from Lacticaseibacillus casei (strain BL23) (Lactobacillus casei).